The following is a 1127-amino-acid chain: Nck-associated protein 1-like (1127 aa).

Positions 638–670 (KAKNKKTRKQRQTPRKGEPERDKPGAESHRKNR) are disordered. Residues 639-651 (AKNKKTRKQRQTP) are compositionally biased toward basic residues. A compositionally biased stretch (basic and acidic residues) spans 652-666 (RKGEPERDKPGAESH). A helical membrane pass occupies residues 996-1016 (VACLLLIFLAVSLPLLATDPS).

It belongs to the HEM-1/HEM-2 family. As to quaternary structure, in hematopoietic cells, component of the WAVE2 complex composed of ABI1, CYFIP1/SRA1, NCKAP1L/HEM1 and WASF2/WAVE2. Interacts with ARHGAP4, PIK3C3/VPS34 and PPP1R12A/MYPT1. Interacts with mammalian target of rapamycin complex 2 (mTORC2) components, including MTOR and RICTOR. Expressed only in cells of hematopoietic origin. Expressed in neutrophils (at protein level). Expressed in T-cells (at protein level).

It is found in the cell membrane. The protein localises to the cytoplasm. In terms of biological role, essential hematopoietic-specific regulator of the actin cytoskeleton. Controls lymphocyte development, activation, proliferation and homeostasis, erythrocyte membrane stability, as well as phagocytosis and migration by neutrophils and macrophages. Component of the WAVE2 complex which signals downstream of RAC to stimulate F-actin polymerization. Required for stabilization and/or translation of the WAVE2 complex proteins in hematopoietic cells. Within the WAVE2 complex, enables the cortical actin network to restrain excessive degranulation and granule release by T-cells. Required for efficient T-lymphocyte and neutrophil migration. Exhibits complex cycles of activation and inhibition to generate waves of propagating the assembly with actin. Also involved in mechanisms WAVE-independent to regulate myosin and actin polymerization during neutrophil chemotaxis. In T-cells, required for proper mechanistic target of rapamycin complex 2 (mTORC2)-dependent AKT phosphorylation, cell proliferation and cytokine secretion, including that of IL2 and TNF. The polypeptide is Nck-associated protein 1-like (Homo sapiens (Human)).